Consider the following 435-residue polypeptide: Fibrous sheath-interacting protein 1 (435 aa).

Disordered stretches follow at residues 1-109 and 354-393; these read MPMD…DPKL and SQSHKGDMECDANEERNTEPTPGEKILRDRKEQRDRESRL. Residues 18-32 are compositionally biased toward low complexity; it reads SSSRSRPGSRSSNGS. The segment covering 50-63 has biased composition (polar residues); it reads KLNSGQEGHTSNSG. A compositionally biased stretch (basic and acidic residues) spans 64 to 87; the sequence is VEERRNSNDAKWADDSKTKPAKES. Phosphoserine is present on residues S87 and S88. Positions 108–154 form a coiled coil; it reads KLEETNAVLQNAIRKMHRLDKLLAKKQCREKEVKKQGLEMRVKLWEE. 2 stretches are compositionally biased toward basic and acidic residues: residues 355–371 and 378–393; these read QSHKGDMECDANEERNT and KILRDRKEQRDRESRL.

It belongs to the FSIP1 family. May interact with AKAP4. In terms of tissue distribution, detected in male germ cells and testis.

The chain is Fibrous sheath-interacting protein 1 (Fsip1) from Mus musculus (Mouse).